The chain runs to 372 residues: Glutamate 5-kinase (372 aa).

ATP is bound at residue Lys14. 3 residues coordinate substrate: Ser54, Asp141, and Asn153. 173-174 (TD) contributes to the ATP binding site. Residues 280–358 (RGHVVIDAGA…GEIESVLGYM (79 aa)) enclose the PUA domain.

Belongs to the glutamate 5-kinase family.

It is found in the cytoplasm. The enzyme catalyses L-glutamate + ATP = L-glutamyl 5-phosphate + ADP. It participates in amino-acid biosynthesis; L-proline biosynthesis; L-glutamate 5-semialdehyde from L-glutamate: step 1/2. Catalyzes the transfer of a phosphate group to glutamate to form L-glutamate 5-phosphate. The sequence is that of Glutamate 5-kinase from Burkholderia lata (strain ATCC 17760 / DSM 23089 / LMG 22485 / NCIMB 9086 / R18194 / 383).